The following is a 221-amino-acid chain: Stromal cell-derived factor 2-like protein 1 (221 aa).

An N-terminal signal peptide occupies residues methionine 1–alanine 28. 3 consecutive MIR domains span residues alanine 33–glycine 87, glycine 95–serine 150, and glycine 151–glycine 205. A Phosphoserine modification is found at serine 215. The Prevents secretion from ER signature appears at histidine 218 to leucine 221.

As to expression, ubiquitously expressed with high expression in the testis, ovary, uterus, and low expression in heart and skeletal muscle.

The protein resides in the endoplasmic reticulum lumen. The sequence is that of Stromal cell-derived factor 2-like protein 1 (Sdf2l1) from Mus musculus (Mouse).